The chain runs to 484 residues: 6-phosphogluconate dehydrogenase, decarboxylating (484 aa).

NADP(+) contacts are provided by residues 11–16, 34–36, 76–78, and Asn-104; these read GLAVMG, NRT, and VRA. Residues Asn-104 and 130-132 each bind substrate; that span reads SGG. Lys-185 serves as the catalytic Proton acceptor. 188-189 is a substrate binding site; the sequence is HN. The active-site Proton donor is the Glu-192. Positions 193, 262, 289, 447, and 453 each coordinate substrate.

Belongs to the 6-phosphogluconate dehydrogenase family. In terms of assembly, homodimer.

The catalysed reaction is 6-phospho-D-gluconate + NADP(+) = D-ribulose 5-phosphate + CO2 + NADPH. Its pathway is carbohydrate degradation; pentose phosphate pathway; D-ribulose 5-phosphate from D-glucose 6-phosphate (oxidative stage): step 3/3. Functionally, catalyzes the oxidative decarboxylation of 6-phosphogluconate to ribulose 5-phosphate and CO(2), with concomitant reduction of NADP to NADPH. The sequence is that of 6-phosphogluconate dehydrogenase, decarboxylating (gnd) from Haemophilus influenzae (strain ATCC 51907 / DSM 11121 / KW20 / Rd).